A 147-amino-acid chain; its full sequence is UPF0306 protein YPK_3704 (147 aa).

The protein belongs to the UPF0306 family.

This chain is UPF0306 protein YPK_3704, found in Yersinia pseudotuberculosis serotype O:3 (strain YPIII).